Consider the following 89-residue polypeptide: Small ribosomal subunit protein uS14 (89 aa).

Belongs to the universal ribosomal protein uS14 family. In terms of assembly, part of the 30S ribosomal subunit. Contacts proteins S3 and S10.

Binds 16S rRNA, required for the assembly of 30S particles and may also be responsible for determining the conformation of the 16S rRNA at the A site. The sequence is that of Small ribosomal subunit protein uS14 from Streptococcus pneumoniae serotype 2 (strain D39 / NCTC 7466).